Here is a 154-residue protein sequence, read N- to C-terminus: Actin-related protein 2/3 complex subunit 5 (154 aa).

At threonine 142 the chain carries Phosphothreonine.

Belongs to the ARPC5 family. As to quaternary structure, component of the Arp2/3 complex composed of ARP2, ARP3, ARC40/p41-ARC, ARC35/p34-ARC, ARC18/p21-ARC, ARC19/p20-ARC and ARC16/p16-ARC.

It is found in the cytoplasm. The protein resides in the cytoskeleton. The protein localises to the actin patch. Its function is as follows. Functions as a component of the Arp2/3 complex which is involved in regulation of actin polymerization and together with an activating nucleation-promoting factor (NPF) mediates the formation of branched actin networks. The polypeptide is Actin-related protein 2/3 complex subunit 5 (ARC15) (Saccharomyces cerevisiae (strain ATCC 204508 / S288c) (Baker's yeast)).